We begin with the raw amino-acid sequence, 208 residues long: MLVQITALAFLAGIASAGVVVGGYGDGVGVGLGGLGGGLGGVGVGLGGVGVVGGGHGVVDLHTPAHYQFKYGVEDHRTGDRKQQAEVRVGDVVKGEYSLAEPDGTVRVVKYTADDHNGFNAVVSRVGHAVHPQVLVRKAVVPVATHGVVGVGGLGGLGGVGLGGVGLGGVGLGGGLGGVGLLGGRGGLDRGILGGHGGSELKFKRALI.

The signal sequence occupies residues M1 to A17. The stretch at G34–G43 is repeat 1. The tract at residues G34 to G180 is 2 X 10 AA repeats. Positions P64–L135 constitute a Chitin-binding type R&amp;R domain. The stretch at G171–G180 is repeat 2.

Epidermal regions synthesizing hard cuticle.

In terms of biological role, cuticular proteins play a significant role in determining the physical properties of cuticles. This Tenebrio molitor (Yellow mealworm beetle) protein is Adult-specific cuticular protein ACP-20 (ACP20).